Consider the following 379-residue polypeptide: Protein-glutamate methylesterase/protein-glutamine glutaminase (379 aa).

A Response regulatory domain is found at 4–121 (KILVVDDSIF…AANRQDAVAL (118 aa)). Residue D55 is modified to 4-aspartylphosphate. The CheB-type methylesterase domain occupies 186–379 (SGKKYRCLAI…FESHILKEMA (194 aa)). Active-site residues include S198, H225, and D323.

Belongs to the CheB family. Phosphorylated by CheA. Phosphorylation of the N-terminal regulatory domain activates the methylesterase activity.

It is found in the cytoplasm. The catalysed reaction is [protein]-L-glutamate 5-O-methyl ester + H2O = L-glutamyl-[protein] + methanol + H(+). It carries out the reaction L-glutaminyl-[protein] + H2O = L-glutamyl-[protein] + NH4(+). Functionally, involved in chemotaxis. Part of a chemotaxis signal transduction system that modulates chemotaxis in response to various stimuli. Catalyzes the demethylation of specific methylglutamate residues introduced into the chemoreceptors (methyl-accepting chemotaxis proteins or MCP) by CheR. Also mediates the irreversible deamidation of specific glutamine residues to glutamic acid. In Pseudoalteromonas atlantica (strain T6c / ATCC BAA-1087), this protein is Protein-glutamate methylesterase/protein-glutamine glutaminase.